We begin with the raw amino-acid sequence, 393 residues long: Protein Njmu-R1 (393 aa).

A disordered region spans residues 1-74 (MLPSLQESLD…AETPSGDDFS (74 aa)). 2 positions are modified to phosphoserine: Ser-8 and Ser-18. The segment covering 9-24 (LDGDEKELESSEEGGS) has biased composition (acidic residues).

As to quaternary structure, interacts with TBC1D23; this interaction may be indirect.

In terms of biological role, may have a role in spermatogenesis. The protein is Protein Njmu-R1 of Mus musculus (Mouse).